The following is a 167-amino-acid chain: Interferon gamma (167 aa).

A signal peptide spans 1–23; sequence MNYTGYLLAFQLCIILGSSSCYC. Pyrrolidone carboxylic acid is present on Gln-24. N-linked (GlcNAc...) asparagine glycans are attached at residues Asn-39 and Asn-105. The segment at 148–167 is disordered; the sequence is SNLRKRKRSQSTFHGRRASI. Residues 149 to 167 show a composition bias toward basic residues; it reads NLRKRKRSQSTFHGRRASI.

It belongs to the type II (or gamma) interferon family. Homodimer. Interacts with IFNGR1 (via extracellular domain); this interaction promotes IFNGR1 dimerization. In terms of tissue distribution, released primarily from activated T lymphocytes.

The protein resides in the secreted. Type II interferon produced by immune cells such as T-cells and NK cells that plays crucial roles in antimicrobial, antiviral, and antitumor responses by activating effector immune cells and enhancing antigen presentation. Primarily signals through the JAK-STAT pathway after interaction with its receptor IFNGR1 to affect gene regulation. Upon IFNG binding, IFNGR1 intracellular domain opens out to allow association of downstream signaling components JAK2, JAK1 and STAT1, leading to STAT1 activation, nuclear translocation and transcription of IFNG-regulated genes. Many of the induced genes are transcription factors such as IRF1 that are able to further drive regulation of a next wave of transcription. Plays a role in class I antigen presentation pathway by inducing a replacement of catalytic proteasome subunits with immunoproteasome subunits. In turn, increases the quantity, quality, and repertoire of peptides for class I MHC loading. Increases the efficiency of peptide generation also by inducing the expression of activator PA28 that associates with the proteasome and alters its proteolytic cleavage preference. Up-regulates as well MHC II complexes on the cell surface by promoting expression of several key molecules such as cathepsins B/CTSB, H/CTSH, and L/CTSL. Participates in the regulation of hematopoietic stem cells during development and under homeostatic conditions by affecting their development, quiescence, and differentiation. This is Interferon gamma (IFNG) from Dasypus novemcinctus (Nine-banded armadillo).